Here is a 606-residue protein sequence, read N- to C-terminus: ATP-dependent rRNA helicase spb4 (606 aa).

The short motif at 1-29 (MSFQSINIDKWLKNAVAAQGFKKMTPVQA) is the Q motif element. The 182-residue stretch at 32–213 (IPLFLKNKDL…KIAGLRNSVR (182 aa)) folds into the Helicase ATP-binding domain. 45 to 52 (AVTGSGKT) serves as a coordination point for ATP. The short motif at 161 to 164 (DEAD) is the DEAD box element. The region spanning 246 to 400 (CMIHLLCTIE…ALDLSRLKVL (155 aa)) is the Helicase C-terminal domain. Residues 521-574 (KQKEVKEKRNTRREKRKSKKEFLKAQKNEASNNLKQEIVSKAGAQETENDDLID) are disordered. Positions 521–601 (KQKEVKEKRN…KSKKRKNQAS (81 aa)) form a coiled coil. Residues 529-539 (RNTRREKRKSK) are compositionally biased toward basic residues.

The protein belongs to the DEAD box helicase family. DDX55/SPB4 subfamily. As to quaternary structure, component of pre-60S ribosomal complexes.

The protein localises to the nucleus. The protein resides in the nucleolus. It catalyses the reaction ATP + H2O = ADP + phosphate + H(+). ATP-binding RNA helicase involved in the biogenesis of 60S ribosomal subunits. Binds 90S pre-ribosomal particles and dissociates from pre-60S ribosomal particles after processing of 27SB pre-rRNA. Required for the normal formation of 18S rRNA through the processing of pre-rRNAs at sites A0, A1 and A2, and the normal formation of 25S and 5.8S rRNAs through the processing of pre-rRNAs at sites C1 and C2. The sequence is that of ATP-dependent rRNA helicase spb4 from Schizosaccharomyces pombe (strain 972 / ATCC 24843) (Fission yeast).